The primary structure comprises 280 residues: Ribosomal RNA small subunit methyltransferase A (280 aa).

Residues asparagine 28, leucine 30, glycine 55, glutamate 77, aspartate 103, and asparagine 122 each coordinate S-adenosyl-L-methionine.

This sequence belongs to the class I-like SAM-binding methyltransferase superfamily. rRNA adenine N(6)-methyltransferase family. RsmA subfamily.

The protein localises to the cytoplasm. It catalyses the reaction adenosine(1518)/adenosine(1519) in 16S rRNA + 4 S-adenosyl-L-methionine = N(6)-dimethyladenosine(1518)/N(6)-dimethyladenosine(1519) in 16S rRNA + 4 S-adenosyl-L-homocysteine + 4 H(+). Its function is as follows. Specifically dimethylates two adjacent adenosines (A1518 and A1519) in the loop of a conserved hairpin near the 3'-end of 16S rRNA in the 30S particle. May play a critical role in biogenesis of 30S subunits. The protein is Ribosomal RNA small subunit methyltransferase A of Ruegeria sp. (strain TM1040) (Silicibacter sp.).